The sequence spans 446 residues: MERECEESVVVAVVTEPRFTQRYRDYLEEQKLLDRLHRVAKLRDGAVALPVLAESLSEQHLQELRDRVAPGSTCVLTRLPDPLPSKKARVRSPAQILCLEVRRWVEDRGVTWSAELEADLPRSWQRHGDLMLLSEDCFQATLWKGLEPELWETVASALGVQRLAKRGRVLPDGTRTPSVTLLLGDHGWVEHMDNGIRYKFDVTQCMFSFGNITEKLRVASLSCAGEVLVDLYAGIGYFTLPFLVHAGAAFVHACEWNPHAVVALRNNLEINGVADRCQIHFGDNRKLKLSDIADRVNLGLIPSSKEGWPVACQVLRKDVGGILHIHQNVESFSGKTPQPPGSNNVEKEHWPRPQKITTDTQGNGTTENFRGEISSANKPEWWRWAESAETQIASLLHQVHGKPWRTRILHVHPVKSYAPHVDHIVLDLECRPLTSSWPEGVDLLTQ.

S-adenosyl-L-methionine contacts are provided by residues Ser-208, Lys-215, Glu-255, and 283–284 (DN).

This sequence belongs to the class I-like SAM-binding methyltransferase superfamily. TRM5/TYW2 family.

The enzyme catalyses 4-demethylwyosine(37) in tRNA(Phe) + S-adenosyl-L-methionine = 4-demethyl-7-[(3S)-3-amino-3-carboxypropyl]wyosine(37) in tRNA(Phe) + S-methyl-5'-thioadenosine + H(+). It participates in tRNA modification; wybutosine-tRNA(Phe) biosynthesis. Its function is as follows. S-adenosyl-L-methionine-dependent transferase that acts as a component of the wybutosine biosynthesis pathway. Wybutosine is a hyper modified guanosine with a tricyclic base found at the 3'-position adjacent to the anticodon of eukaryotic phenylalanine tRNA. Catalyzes the transfer of the alpha-amino-alpha-carboxypropyl (acp) group from S-adenosyl-L-methionine to the C-7 position of 4-demethylwyosine (imG-14) to produce wybutosine-86. In Mus musculus (Mouse), this protein is tRNA wybutosine-synthesizing protein 2 homolog (Trmt12).